A 360-amino-acid polypeptide reads, in one-letter code: NAD(P)H-quinone oxidoreductase subunit 1, chloroplastic (360 aa).

Transmembrane regions (helical) follow at residues 27–47 (IWIF…VLVI), 98–118 (FSIG…IIPF), 129–149 (IGIF…LMSG), 165–185 (AAQS…ISLL), 203–223 (FWGW…ISSL), 253–273 (FGLF…FVTV), 297–317 (IFGT…FLFI), and 340–360 (FLLP…LFSL).

It belongs to the complex I subunit 1 family. As to quaternary structure, NDH is composed of at least 16 different subunits, 5 of which are encoded in the nucleus.

The protein localises to the plastid. Its subcellular location is the chloroplast thylakoid membrane. It carries out the reaction a plastoquinone + NADH + (n+1) H(+)(in) = a plastoquinol + NAD(+) + n H(+)(out). The catalysed reaction is a plastoquinone + NADPH + (n+1) H(+)(in) = a plastoquinol + NADP(+) + n H(+)(out). Its function is as follows. NDH shuttles electrons from NAD(P)H:plastoquinone, via FMN and iron-sulfur (Fe-S) centers, to quinones in the photosynthetic chain and possibly in a chloroplast respiratory chain. The immediate electron acceptor for the enzyme in this species is believed to be plastoquinone. Couples the redox reaction to proton translocation, and thus conserves the redox energy in a proton gradient. The polypeptide is NAD(P)H-quinone oxidoreductase subunit 1, chloroplastic (Lobularia maritima (Sweet alyssum)).